The chain runs to 140 residues: Putative 6-pyruvoyl tetrahydrobiopterin synthase (140 aa).

Residue H19 participates in Zn(2+) binding. C38 acts as the Proton acceptor in catalysis. Zn(2+) is bound by residues H44 and H46. Residues H84 and E129 each act as charge relay system in the active site.

The protein belongs to the PTPS family. As to quaternary structure, homohexamer formed of two homotrimers in a head to head fashion. The cofactor is Zn(2+).

The enzyme catalyses 7,8-dihydroneopterin 3'-triphosphate = 6-pyruvoyl-5,6,7,8-tetrahydropterin + triphosphate + H(+). It functions in the pathway cofactor biosynthesis; tetrahydrobiopterin biosynthesis; tetrahydrobiopterin from 7,8-dihydroneopterin triphosphate: step 1/3. Functionally, involved in the biosynthesis of tetrahydrobiopterin, an essential cofactor of aromatic amino acid hydroxylases. Catalyzes the transformation of 7,8-dihydroneopterin triphosphate into 6-pyruvoyl tetrahydropterin. This is Putative 6-pyruvoyl tetrahydrobiopterin synthase (ptps-1) from Caenorhabditis elegans.